A 542-amino-acid polypeptide reads, in one-letter code: Chaperonin GroEL (542 aa).

ATP is bound by residues 29 to 32 (TMGP), lysine 50, 86 to 90 (DGTTT), glycine 414, 477 to 479 (NAA), and aspartate 493.

Belongs to the chaperonin (HSP60) family. In terms of assembly, forms a cylinder of 14 subunits composed of two heptameric rings stacked back-to-back. Interacts with the co-chaperonin GroES.

Its subcellular location is the cytoplasm. It catalyses the reaction ATP + H2O + a folded polypeptide = ADP + phosphate + an unfolded polypeptide.. Together with its co-chaperonin GroES, plays an essential role in assisting protein folding. The GroEL-GroES system forms a nano-cage that allows encapsulation of the non-native substrate proteins and provides a physical environment optimized to promote and accelerate protein folding. This Sulfurimonas denitrificans (strain ATCC 33889 / DSM 1251) (Thiomicrospira denitrificans (strain ATCC 33889 / DSM 1251)) protein is Chaperonin GroEL.